A 340-amino-acid polypeptide reads, in one-letter code: tRNA N6-adenosine threonylcarbamoyltransferase (340 aa).

2 residues coordinate Fe cation: H111 and H115. Substrate-binding positions include 134 to 138 (LVSGG), D167, G180, and N276. Residue D304 coordinates Fe cation.

The protein belongs to the KAE1 / TsaD family. Requires Fe(2+) as cofactor.

Its subcellular location is the cytoplasm. It carries out the reaction L-threonylcarbamoyladenylate + adenosine(37) in tRNA = N(6)-L-threonylcarbamoyladenosine(37) in tRNA + AMP + H(+). Required for the formation of a threonylcarbamoyl group on adenosine at position 37 (t(6)A37) in tRNAs that read codons beginning with adenine. Is involved in the transfer of the threonylcarbamoyl moiety of threonylcarbamoyl-AMP (TC-AMP) to the N6 group of A37, together with TsaE and TsaB. TsaD likely plays a direct catalytic role in this reaction. This Helicobacter pylori (strain G27) protein is tRNA N6-adenosine threonylcarbamoyltransferase.